Reading from the N-terminus, the 194-residue chain is HTH-type transcriptional regulator BetI (194 aa).

The HTH tetR-type domain occupies 8–68 (EIRRAQLIDA…ATMRHVLRDL (61 aa)). Positions 31 to 50 (TLASVAQRANISTGIVSHYF) form a DNA-binding region, H-T-H motif.

It functions in the pathway amine and polyamine biosynthesis; betaine biosynthesis via choline pathway [regulation]. Its function is as follows. Repressor involved in the biosynthesis of the osmoprotectant glycine betaine. It represses transcription of the choline transporter BetT and the genes of BetAB involved in the synthesis of glycine betaine. The protein is HTH-type transcriptional regulator BetI of Burkholderia ambifaria (strain MC40-6).